The primary structure comprises 191 residues: Cyclin-dependent kinase inhibitor 1 (191 aa).

The segment at 62-81 (LIHLEEEDKDGDTETSTYRR) is disordered. The tract at residues 162 to 191 (QLKEKFKKKYNFDFEKEKPLEGRYEWVKLE) is required for inhibitory function and interaction with CDK kinase complexes.

Belongs to the CDI family. ICK/KRP subfamily. In terms of assembly, specifically interacts with CDKA-1, but not with CDKB1-1. Interacts with CYCD2-1 and CYCD3-1. In terms of processing, ubiquitinated independently by RKP and SCF (SKP1-CUL1-FBL5/SKP2B) protein ligase complex, leading to proteasomal degradation. In terms of tissue distribution, expressed at low levels in roots, stems, leaves and flowers.

It localises to the nucleus. Its subcellular location is the nucleoplasm. Functionally, binds and inhibits CYCD2-1/CDKA-1 kinase complex activity. Regulates cell division which is crucial for plant growth, development and morphogenesis. Functions in turning cells from a mitotic to an endoreplicating cell cycle mode. Acts cell- and non-cell-autonomously to regulate endoreduplication by allowing S phase progression, but blocking entry into mitosis. Keeps on the one hand the plant cell cycle locally controlled, and on the other hand provides a possibility of linking cell cycle control in single cells with the supracellular organization of a tissue or an organ. May target specifically CDKA-1. The chain is Cyclin-dependent kinase inhibitor 1 (KRP1) from Arabidopsis thaliana (Mouse-ear cress).